Consider the following 213-residue polypeptide: Large ribosomal subunit protein uL3 (213 aa).

Residues threonine 135–arginine 155 form a disordered region.

The protein belongs to the universal ribosomal protein uL3 family. As to quaternary structure, part of the 50S ribosomal subunit. Forms a cluster with proteins L14 and L19.

One of the primary rRNA binding proteins, it binds directly near the 3'-end of the 23S rRNA, where it nucleates assembly of the 50S subunit. The sequence is that of Large ribosomal subunit protein uL3 from Synechocystis sp. (strain ATCC 27184 / PCC 6803 / Kazusa).